We begin with the raw amino-acid sequence, 339 residues long: Anthranilate phosphoribosyltransferase (339 aa).

5-phospho-alpha-D-ribose 1-diphosphate is bound by residues G82, G85 to D86, N92 to T95, K110 to S118, and S122. Position 82 (G82) interacts with anthranilate. Residue S94 participates in Mg(2+) binding. N113 serves as a coordination point for anthranilate. Residue R168 participates in anthranilate binding. Residues D227 and E228 each coordinate Mg(2+).

This sequence belongs to the anthranilate phosphoribosyltransferase family. In terms of assembly, homodimer. The cofactor is Mg(2+).

The enzyme catalyses N-(5-phospho-beta-D-ribosyl)anthranilate + diphosphate = 5-phospho-alpha-D-ribose 1-diphosphate + anthranilate. It participates in amino-acid biosynthesis; L-tryptophan biosynthesis; L-tryptophan from chorismate: step 2/5. Its function is as follows. Catalyzes the transfer of the phosphoribosyl group of 5-phosphorylribose-1-pyrophosphate (PRPP) to anthranilate to yield N-(5'-phosphoribosyl)-anthranilate (PRA). The sequence is that of Anthranilate phosphoribosyltransferase from Ruthia magnifica subsp. Calyptogena magnifica.